Consider the following 132-residue polypeptide: Small ribosomal subunit protein uS9 (132 aa).

The protein belongs to the universal ribosomal protein uS9 family.

The polypeptide is Small ribosomal subunit protein uS9 (rpsI) (Mycoplasma genitalium (strain ATCC 33530 / DSM 19775 / NCTC 10195 / G37) (Mycoplasmoides genitalium)).